A 134-amino-acid polypeptide reads, in one-letter code: Small ribosomal subunit protein uS8c (134 aa).

This sequence belongs to the universal ribosomal protein uS8 family. Part of the 30S ribosomal subunit.

The protein localises to the plastid. The protein resides in the chloroplast. One of the primary rRNA binding proteins, it binds directly to 16S rRNA central domain where it helps coordinate assembly of the platform of the 30S subunit. This chain is Small ribosomal subunit protein uS8c (rps8), found in Phaseolus vulgaris (Kidney bean).